Reading from the N-terminus, the 1151-residue chain is Phospholipid-transporting ATPase NEO1 (1151 aa).

2 disordered regions span residues 1–21 and 73–95; these read MPNPPSFKSHKQNLFNSNNNQ and LDNFSNHSSDSHRKSSNTDTHPL. Residues 1-184 lie on the Extracellular side of the membrane; sequence MPNPPSFKSH…LSNAKYNAVT (184 aa). Over residues 12 to 21 the composition is skewed to polar residues; it reads QNLFNSNNNQ. The interval 51–104 is required for endosome-to-Golgi sorting; that stretch reads EPLSKHNTVGDRESFEMRTVDDLDNFSNHSSDSHRKSSNTDTHPLMYDNRLSQD. Serine 102 is subject to Phosphoserine. A helical membrane pass occupies residues 185 to 205; it reads FVPTLLYEQFKFFYNLYFLVV. At 206–209 the chain is on the cytoplasmic side; that stretch reads ALSQ. A helical membrane pass occupies residues 210–230; the sequence is AVPALRIGYLSSYIVPLAFVL. Residues 231–367 are Extracellular-facing; sequence TVTMAKEAID…TSNPLSVDNT (137 aa). Residues 368-388 traverse the membrane as a helical segment; that stretch reads LWANTVLASSGFCIACVVYTG. Over 389 to 416 the chain is Cytoplasmic; it reads RDTRQAMNTTTAKVKTGLLELEINSISK. The helical transmembrane segment at 417-437 threads the bilayer; sequence ILCACVFALSILLVAFAGFHN. Position 438 (aspartate 438) is a topological domain, extracellular. A helical membrane pass occupies residues 439–459; that stretch reads DWYIDILRYLILFSTIIPVSL. Residues 460–947 are Cytoplasmic-facing; it reads RVNLDLAKSV…KLAQFVMHRG (488 aa). Aspartate 503 acts as the 4-aspartylphosphate intermediate in catalysis. Residues aspartate 503, lysine 504, and threonine 505 each coordinate ATP. Aspartate 503 is a Mg(2+) binding site. Mg(2+) is bound at residue threonine 505. Phosphoserine is present on serine 551. ATP is bound by residues glutamate 597, phenylalanine 640, serine 642, lysine 645, lysine 664, arginine 693, threonine 694, threonine 774, glycine 775, aspartate 776, arginine 856, and lysine 862. Aspartate 882 is a Mg(2+) binding site. Residues asparagine 885 and aspartate 886 each coordinate ATP. Aspartate 886 contacts Mg(2+). A helical membrane pass occupies residues 948–968; that stretch reads LIIAICQAVYSICSLFEPIAL. Topologically, residues 969 to 970 are extracellular; that stretch reads YQ. A helical transmembrane segment spans residues 971-991; it reads GWLMVGYATCYTMAPVFSLTL. Residues 992–1020 lie on the Cytoplasmic side of the membrane; sequence DHDIEESLTKIYPELYKELTEGKSLSYKT. A helical membrane pass occupies residues 1021–1041; sequence FFVWVLLSLFQGSVIQLFSQA. At 1042-1052 the chain is on the extracellular side; the sequence is FTSLLDTDFTR. The chain crosses the membrane as a helical span at residues 1053 to 1073; sequence MVAISFTALVVNELIMVALEI. The Cytoplasmic portion of the chain corresponds to 1074-1078; that stretch reads YTWNK. The helical transmembrane segment at 1079–1099 threads the bilayer; it reads TMLVTEIATLLFYIVSVPFLG. At 1100 to 1109 the chain is on the extracellular side; that stretch reads DYFDLGYMTT. A helical transmembrane segment spans residues 1110-1130; the sequence is VNYYAGLLVILLISIFPVWTA. Residues 1131-1151 lie on the Cytoplasmic side of the membrane; it reads KAIYRRLHPPSYAKVQEFATP. The interval 1131 to 1151 is required for endosomal targeting; the sequence is KAIYRRLHPPSYAKVQEFATP.

Belongs to the cation transport ATPase (P-type) (TC 3.A.3) family. Type IV subfamily. As to quaternary structure, interacts with MON2. Interacts with ANY1. Functions without a CDC50/LEM3 family accessory subunit. Mg(2+) is required as a cofactor.

It localises to the endosome membrane. It is found in the golgi apparatus membrane. The catalysed reaction is ATP + H2O + phospholipidSide 1 = ADP + phosphate + phospholipidSide 2.. The enzyme catalyses a 1,2-diacyl-sn-glycero-3-phospho-L-serine(out) + ATP + H2O = a 1,2-diacyl-sn-glycero-3-phospho-L-serine(in) + ADP + phosphate + H(+). It carries out the reaction a 1,2-diacyl-sn-glycero-3-phosphoethanolamine(out) + ATP + H2O = a 1,2-diacyl-sn-glycero-3-phosphoethanolamine(in) + ADP + phosphate + H(+). In terms of biological role, flippase that catalyzes the hydrolysis of ATP coupled to the transport of lysophosphatidylserine, phosphatidylethanolamine, and phosphatidylserine from the lumenal to the cytosolic leaflet of the Golgi apparatus membrane and ensures the maintenance of asymmetric distribution of phospholipids. Does not appear to transport phosphatidylcholine or sphingomyelin. May be involved in recycling from endosomes by driving the formation of SNX3-dependent recycling tubules. Required for COPI retrograde transport from the Golgi to the endoplasmic reticulum, Golgi-endosome trafficking, and Golgi-dependent protein glycosylation. The polypeptide is Phospholipid-transporting ATPase NEO1 (Saccharomyces cerevisiae (strain ATCC 204508 / S288c) (Baker's yeast)).